We begin with the raw amino-acid sequence, 216 residues long: Octanoyltransferase (216 aa).

The region spanning 35 to 213 is the BPL/LPL catalytic domain; sequence NSNPDFIWIG…TIEEEFNFDF (179 aa). Substrate contacts are provided by residues 77–84, 144–146, and 157–159; these read RGGEVTCH, SIG, and GFS. Cys-175 acts as the Acyl-thioester intermediate in catalysis.

The protein belongs to the LipB family.

It is found in the cytoplasm. It catalyses the reaction octanoyl-[ACP] + L-lysyl-[protein] = N(6)-octanoyl-L-lysyl-[protein] + holo-[ACP] + H(+). It participates in protein modification; protein lipoylation via endogenous pathway; protein N(6)-(lipoyl)lysine from octanoyl-[acyl-carrier-protein]: step 1/2. In terms of biological role, catalyzes the transfer of endogenously produced octanoic acid from octanoyl-acyl-carrier-protein onto the lipoyl domains of lipoate-dependent enzymes. Lipoyl-ACP can also act as a substrate although octanoyl-ACP is likely to be the physiological substrate. The chain is Octanoyltransferase from Prochlorococcus marinus (strain MIT 9301).